The sequence spans 241 residues: tRNA pseudouridine synthase B (241 aa).

D52 serves as the catalytic Nucleophile.

The protein belongs to the pseudouridine synthase TruB family. Type 1 subfamily.

The enzyme catalyses uridine(55) in tRNA = pseudouridine(55) in tRNA. Functionally, responsible for synthesis of pseudouridine from uracil-55 in the psi GC loop of transfer RNAs. This chain is tRNA pseudouridine synthase B, found in Chloroherpeton thalassium (strain ATCC 35110 / GB-78).